Reading from the N-terminus, the 245-residue chain is Malonyl-[acyl-carrier protein] O-methyltransferase (245 aa).

Belongs to the methyltransferase superfamily.

The enzyme catalyses malonyl-[ACP] + S-adenosyl-L-methionine = malonyl-[ACP] methyl ester + S-adenosyl-L-homocysteine. Its pathway is cofactor biosynthesis; biotin biosynthesis. Its function is as follows. Converts the free carboxyl group of a malonyl-thioester to its methyl ester by transfer of a methyl group from S-adenosyl-L-methionine (SAM). It allows to synthesize pimeloyl-ACP via the fatty acid synthetic pathway. The chain is Malonyl-[acyl-carrier protein] O-methyltransferase from Calditerrivibrio nitroreducens (strain DSM 19672 / NBRC 101217 / Yu37-1).